Reading from the N-terminus, the 244-residue chain is 14-3-3 protein homolog 1 (244 aa).

This sequence belongs to the 14-3-3 family.

This Echinococcus multilocularis (Fox tapeworm) protein is 14-3-3 protein homolog 1.